The primary structure comprises 743 residues: Pentatricopeptide repeat-containing protein At2g16880 (743 aa).

PPR repeat units follow at residues 130–164, 165–202, 203–233, 239–273, 274–308, 309–343, 344–378, 379–414, 415–449, 450–484, 485–519, 520–554, 555–589, 590–620, 624–658, and 659–689; these read SKAL…KLKP, NLLT…GVSL, NVQT…MVSE, DNVT…GLVP, NRVT…NVLP, DLCT…KLQP, DVVT…GVKA, NQVT…GFSP, DIVT…GIKM, NTIT…GFIV, DEVT…KITP, TVST…GLLP, DDST…SFKP, DNYT…LIEE, DTVT…GLEP, and DRFT…FSGK.

Belongs to the PPR family. P subfamily.

In Arabidopsis thaliana (Mouse-ear cress), this protein is Pentatricopeptide repeat-containing protein At2g16880.